Here is an 863-residue protein sequence, read N- to C-terminus: Bifunctional uridylyltransferase/uridylyl-removing enzyme (863 aa).

The uridylyltransferase stretch occupies residues 1–328 (MLFPLSLSSP…SSNQATVIEQ (328 aa)). The interval 329 to 687 (LDDDFQLINQ…ISNRFSLGGT (359 aa)) is uridylyl-removing. The HD domain occupies 446 to 568 (VDEHTLRVML…VQNQVRLDYL (123 aa)). ACT domains are found at residues 688–772 (EVFI…PNRQ) and 794–863 (EMEL…RNIG).

Belongs to the GlnD family. The cofactor is Mg(2+).

It catalyses the reaction [protein-PII]-L-tyrosine + UTP = [protein-PII]-uridylyl-L-tyrosine + diphosphate. The enzyme catalyses [protein-PII]-uridylyl-L-tyrosine + H2O = [protein-PII]-L-tyrosine + UMP + H(+). Uridylyltransferase (UTase) activity is inhibited by glutamine, while glutamine activates uridylyl-removing (UR) activity. Modifies, by uridylylation and deuridylylation, the PII regulatory proteins (GlnB and homologs), in response to the nitrogen status of the cell that GlnD senses through the glutamine level. Under low glutamine levels, catalyzes the conversion of the PII proteins and UTP to PII-UMP and PPi, while under higher glutamine levels, GlnD hydrolyzes PII-UMP to PII and UMP (deuridylylation). Thus, controls uridylylation state and activity of the PII proteins, and plays an important role in the regulation of nitrogen assimilation and metabolism. The protein is Bifunctional uridylyltransferase/uridylyl-removing enzyme of Haemophilus influenzae (strain PittEE).